Consider the following 306-residue polypeptide: D-alanine--D-alanine ligase (306 aa).

The region spanning lysine 107 to glutamate 303 is the ATP-grasp domain. Residue isoleucine 134 to threonine 189 coordinates ATP. Positions 257, 270, and 272 each coordinate Mg(2+).

It belongs to the D-alanine--D-alanine ligase family. The cofactor is Mg(2+). Requires Mn(2+) as cofactor.

It localises to the cytoplasm. The catalysed reaction is 2 D-alanine + ATP = D-alanyl-D-alanine + ADP + phosphate + H(+). It functions in the pathway cell wall biogenesis; peptidoglycan biosynthesis. Functionally, cell wall formation. This Pseudoalteromonas translucida (strain TAC 125) protein is D-alanine--D-alanine ligase.